We begin with the raw amino-acid sequence, 160 residues long: Ribosomal RNA large subunit methyltransferase H (160 aa).

S-adenosyl-L-methionine contacts are provided by residues Leu77, Gly109, and 128–133; that span reads FSRMTF.

Belongs to the RNA methyltransferase RlmH family. Homodimer.

It localises to the cytoplasm. The catalysed reaction is pseudouridine(1915) in 23S rRNA + S-adenosyl-L-methionine = N(3)-methylpseudouridine(1915) in 23S rRNA + S-adenosyl-L-homocysteine + H(+). In terms of biological role, specifically methylates the pseudouridine at position 1915 (m3Psi1915) in 23S rRNA. In Pelotomaculum thermopropionicum (strain DSM 13744 / JCM 10971 / SI), this protein is Ribosomal RNA large subunit methyltransferase H.